A 1488-amino-acid chain; its full sequence is MIERGKFRSLTLINWNGFFARTFDLDELVTTLSGGNGAGKSTTMAAFVTALIPDLTLLHFRNTTEAGATSGSRDKGLHGKLKAGVCYSMLDTINSRHQRVVVGVRLQQVAGRDRKVDIKPFAIQGLPMSVQPTQLVTETLNERQARVLSLAELKDKLDEMEGVQFKQFNSITDYHSLMFDLGIIARRLRSASDRSKFYRLIEASLYGGISSAITRSLRDYLLPENSGVRKAFQDMEAALRENRLTLEAIRVTQSDRDLFKHLISEATDYVAADYMRHANERRVHLDQALAFRRELYTSRKQLAAEQYKHVDMARELGEHNGAEGSLEADYQAASDHLNLVQTALRQQEKIERYEADLEELQIRLEEQNEVVAEAAEMQDENEARAEAAELEVDELKSQLADYQQALDVQQTRAIQYNQAISALSRAKELCHLPDLTPESAAEWLDTFQAKEQEATEKLLSLEQKMSVAQTAHSQFEQAYQLVAAINGPLARSEAWDVARELLRDGVNQRHLAEQVQPLRMRLSELEQRLREQQEAERLLAEFCKRQGKNFDIDELEALHQELEARIASLSDSVSSASEQRMALRQEQEQLQSRIQHLMRRAPVWLAAQNSLNQLSEQCGEEFTSSQEVTEYLQQLLEREREAIVERDEVGARKNAVDEEIERLSQPGGAEDQRLNALAERFGGVLLSEIYDDVSLEDAPYFSALYGPSRHAIVVPDLSQIAEQLEGLTDCPEDLYLIEGDPQSFDDSVFSVDELEKAVVVKIADRQWRYSRFPSLPIFGRAARENRIESLHAEREVLSERFATLSFDVQKTQRLHQAFSRFIGSHLSVAFEDDPEAEIRRLNGRRVELERALATHESDNQQQRLQFEQAKEGVSALNRLLPRLNLLADETLADRVDEIQERLDEAQEAARFVQQYGNQLAKLEPVVSVLQSDPEQFEQLKEDYAWSQQMQRDARQQAFALAEVVERRAHFSYSDSAEMLSGNSDLNEKLRQRLEQAEAERTRAREALRSHAAQLSQYSQVLASLKSSYDTKKELLNDLQRELQDIGVRADSGAEERARQRRDELHAQLSNNRSRRNQLEKALTFCEAEMENLTRKLRKLERDYHEMREQVVTAKAGWCAVMRMVKDNGVERRLHRRELAYLSADELRSMSDKALGALRLAVADNEHLRDVLRLSEDPKRPERKIQFFVAVYQHLRERIRQDIIRTDDPVEAIEQMEIELSRLTEELTSREQKLAISSRSVANIIRKTIQREQNRIRMLNQGLQSVSFGQVNSVRLNVNVRETHATLLDVLSEQQEQHQDLFNSNRLTFSEALAKLYQRLNPQIDMGQRTPQTIGEELLDYRNYLEMEVEVNRGSDGWLRAESGALSTGEAIGTGMSILVMVVQSWEDEARRLRGKDISPCRLLFLDEAARLDARSIATLFELCERLQMQLIIAAPENISPEKGTTYKLVRKVFQNTEHVHVVGLRGFAPQLPETLPGTQTEDTPSEAS.

34-41 (GGNGAGKS) provides a ligand contact to ATP. 3 coiled-coil regions span residues 326-418 (LEAD…QYNQ), 444-472 (LDTF…QTAH), and 509-602 (RHLA…RRAP). The tract at residues 666–783 (PGGAEDQRLN…SLPIFGRAAR (118 aa)) is flexible hinge. Coiled-coil stretches lie at residues 835–923 (EAEI…AKLE), 977–1116 (EMLS…AKAG), and 1209–1265 (VEAI…LQSV). The tract at residues 1049–1074 (ADSGAEERARQRRDELHAQLSNNRSR) is disordered. Over residues 1051-1065 (SGAEERARQRRDELH) the composition is skewed to basic and acidic residues.

The protein belongs to the SMC family. MukB subfamily. In terms of assembly, homodimerization via its hinge domain. Binds to DNA via its C-terminal region. Interacts, and probably forms a ternary complex, with MukE and MukF via its C-terminal region. The complex formation is stimulated by calcium or magnesium. Interacts with tubulin-related protein FtsZ.

Its subcellular location is the cytoplasm. It localises to the nucleoid. Functionally, plays a central role in chromosome condensation, segregation and cell cycle progression. Functions as a homodimer, which is essential for chromosome partition. Involved in negative DNA supercoiling in vivo, and by this means organize and compact chromosomes. May achieve or facilitate chromosome segregation by condensation DNA from both sides of a centrally located replisome during cell division. In Salmonella heidelberg (strain SL476), this protein is Chromosome partition protein MukB.